The primary structure comprises 1072 residues: Guanylyl cyclase C (1072 aa).

An N-terminal signal peptide occupies residues 1-22 (MTSLLGLAVRLLLFQPTLMFWA). Residues 23–429 (SQVRQKCHNG…PNDVPGLGPQ (407 aa)) lie on the Extracellular side of the membrane. Residues N31, N74, N78, N187, N194, N306, and N401 are each glycosylated (N-linked (GlcNAc...) asparagine). The helical transmembrane segment at 430-453 (ILMIAVFTLTGIVVVLLLIALLVL) threads the bilayer. Topologically, residues 454 to 1072 (RKYRRDHELR…NNSDHDSTYF (619 aa)) are cytoplasmic. Positions 488–748 (LKIDDDRRRD…KIESTLAKIF (261 aa)) constitute a Protein kinase domain. A Guanylate cyclase domain is found at 823 to 953 (TIYFSDIVGF…DTVNTASRME (131 aa)).

It belongs to the adenylyl cyclase class-4/guanylyl cyclase family. As to quaternary structure, homotrimer. Interacts via its C-terminal region with PDZK2. Interacts with the lectin chaperone VIP36. Glycosylation at Asn-74 and/or Asn-78 is required for interaction with VIP36 while glycosylation at Asn-401 modulates ligand-mediated GC-C activation.

Its subcellular location is the cell membrane. The protein localises to the endoplasmic reticulum membrane. It catalyses the reaction GTP = 3',5'-cyclic GMP + diphosphate. Its function is as follows. Guanylyl cyclase that catalyzes synthesis of cyclic GMP (cGMP) from GTP. Receptor for the E.coli heat-stable enterotoxin; E.coli enterotoxin markedly stimulates the accumulation of cGMP in mammalian cells expressing GUCY2C. This is Guanylyl cyclase C (Gucy2c) from Rattus norvegicus (Rat).